The following is a 471-amino-acid chain: MKMPKAIGLVHFIGIGGIGMSGIAEVLHNLGHRVQGSDQADSANVQRLRDKGIEVFVGHTADNLGDAEVVVVSTAIKKNNPELIAAREKHLPIVRRAEMLAELMRFRNAIAIGGTHGKTTTTSMVATLLEAGNLDPTVINGGIINAYGTNARMGEGEWMVVEADESDGTFLKLPADVAVITNIDPEHLDHYGNFDAVRAAFRQFVENVPFYGFGVMCLDHPEVQALVGRIEDRKVITYGENPQADVRFSNVRIDGTRSIFDVEIRRRRTGKIFSFKDLVLPMPGRHNVSNATAAIAVANRLGISEADIKKGLASFAGVKRRFTLTGEANGVQVFDDYGHHPVEIKAVLAAAREACKGRIIAVHQPHRYSRLSSLFDDFAHCFNDADTILLAPVYAAGEDPIEGASSEALVSAIKAAGHRDARFLEKREDLASQVAAIANPGDFVVLLGAGNITQWAAALPSELKSISGKSE.

Position 114 to 120 (114 to 120 (GTHGKTT)) interacts with ATP.

Belongs to the MurCDEF family.

It is found in the cytoplasm. It catalyses the reaction UDP-N-acetyl-alpha-D-muramate + L-alanine + ATP = UDP-N-acetyl-alpha-D-muramoyl-L-alanine + ADP + phosphate + H(+). The protein operates within cell wall biogenesis; peptidoglycan biosynthesis. Functionally, cell wall formation. In Agrobacterium fabrum (strain C58 / ATCC 33970) (Agrobacterium tumefaciens (strain C58)), this protein is UDP-N-acetylmuramate--L-alanine ligase.